The following is a 136-amino-acid chain: Large ribosomal subunit protein uL16 (136 aa).

The protein belongs to the universal ribosomal protein uL16 family. In terms of assembly, part of the 50S ribosomal subunit.

In terms of biological role, binds 23S rRNA and is also seen to make contacts with the A and possibly P site tRNAs. In Wigglesworthia glossinidia brevipalpis, this protein is Large ribosomal subunit protein uL16.